A 1053-amino-acid chain; its full sequence is CRISPR-associated endonuclease Cas9 (1053 aa).

The interval 1-41 is ruvC-I; sequence MKRNYILGLDIGITSVGYGIIDYETRDVIDAGVRLFKEANV. Residue D10 is the For RuvC-like nuclease domain of the active site. D10 is a binding site for Mg(2+). The interval 41–426 is recognition lobe; that stretch reads VENNEGRRSK…IFNRLKLVPK (386 aa). Residues 435-481 form a ruvC-II region; it reads EIPTTLVDDFILSPVVKRSFIQSIKVINAIIKKYGLPNDIIIELARE. 2 residues coordinate Mg(2+): E477 and E481. The HNH Cas9-type domain maps to 480 to 646; that stretch reads REKNSKDAQK…VQKDFINRNL (167 aa). H557 (proton acceptor for HNH nuclease domain) is an active-site residue. The interval 650-775 is ruvC-III; sequence RYATRGLMNL…FKDYKYSHRV (126 aa). H701 provides a ligand contact to Mg(2+). Y789 is an RNA binding site. PAM substrate-binding regions lie at residues 882–889 and 985–993; these read YYGNKLNA and NNDLLNRIE. The PAM-interacting domain (PI) stretch occupies residues 910–1053; sequence KPYRFDVYLD…KKHPQIIKKG (144 aa).

It belongs to the CRISPR-associated Cas9 family. Subtype II-A subfamily. As to quaternary structure, monomer. Binds crRNA and tracrRNA. Requires Mg(2+) as cofactor.

Functionally, CRISPR (clustered regularly interspaced short palindromic repeat) is an adaptive immune system that provides protection against mobile genetic elements (viruses, transposable elements and conjugative plasmids). CRISPR clusters contain spacers, sequences complementary to antecedent mobile elements, and target invading nucleic acids. CRISPR clusters are transcribed and processed into CRISPR RNA (crRNA). In type II CRISPR systems correct processing of pre-crRNA requires a trans-encoded small RNA (tracrRNA), endogenous ribonuclease 3 (rnc) and this protein. The tracrRNA serves as a guide for ribonuclease 3-aided processing of pre-crRNA. Subsequently Cas9/crRNA/tracrRNA endonucleolytically cleaves linear or circular dsDNA target complementary to the spacer; Cas9 is inactive in the absence of the 2 guide RNAs (gRNA). Cas9 recognizes the protospacer adjacent motif (PAM) in the CRISPR repeat sequences to help distinguish self versus nonself, as targets within the bacterial CRISPR locus do not have PAMs. PAM recognition is also required for catalytic activity. This chain is CRISPR-associated endonuclease Cas9, found in Staphylococcus aureus.